Consider the following 415-residue polypeptide: Serine hydroxymethyltransferase (415 aa).

(6S)-5,6,7,8-tetrahydrofolate contacts are provided by residues Leu122 and 126–128 (GHL). Lys230 is modified (N6-(pyridoxal phosphate)lysine).

The protein belongs to the SHMT family. In terms of assembly, homodimer. Pyridoxal 5'-phosphate serves as cofactor.

The protein resides in the cytoplasm. The catalysed reaction is (6R)-5,10-methylene-5,6,7,8-tetrahydrofolate + glycine + H2O = (6S)-5,6,7,8-tetrahydrofolate + L-serine. The protein operates within one-carbon metabolism; tetrahydrofolate interconversion. It participates in amino-acid biosynthesis; glycine biosynthesis; glycine from L-serine: step 1/1. Its function is as follows. Catalyzes the reversible interconversion of serine and glycine with tetrahydrofolate (THF) serving as the one-carbon carrier. This reaction serves as the major source of one-carbon groups required for the biosynthesis of purines, thymidylate, methionine, and other important biomolecules. Also exhibits THF-independent aldolase activity toward beta-hydroxyamino acids, producing glycine and aldehydes, via a retro-aldol mechanism. The polypeptide is Serine hydroxymethyltransferase (Leptothrix cholodnii (strain ATCC 51168 / LMG 8142 / SP-6) (Leptothrix discophora (strain SP-6))).